Reading from the N-terminus, the 354-residue chain is Uroporphyrinogen decarboxylase (354 aa).

Substrate is bound by residues 27–31 (RQAGR), Phe46, Asp77, Tyr153, Thr208, and His326.

This sequence belongs to the uroporphyrinogen decarboxylase family. In terms of assembly, homodimer.

The protein resides in the cytoplasm. It carries out the reaction uroporphyrinogen III + 4 H(+) = coproporphyrinogen III + 4 CO2. It functions in the pathway porphyrin-containing compound metabolism; protoporphyrin-IX biosynthesis; coproporphyrinogen-III from 5-aminolevulinate: step 4/4. In terms of biological role, catalyzes the decarboxylation of four acetate groups of uroporphyrinogen-III to yield coproporphyrinogen-III. This Neisseria meningitidis serogroup B (strain ATCC BAA-335 / MC58) protein is Uroporphyrinogen decarboxylase.